Consider the following 100-residue polypeptide: Putative antiporter subunit mnhF2 (100 aa).

3 helical membrane-spanning segments follow: residues 5 to 25 (ITHI…IICL), 38 to 60 (VVTF…VLMG), and 70 to 92 (LIAI…GHVF).

It belongs to the CPA3 antiporters (TC 2.A.63) subunit F family. As to quaternary structure, may form a heterooligomeric complex that consists of seven subunits: mnhA2, mnhB2, mnhC2, mnhD2, mnhE2, mnhF2 and mnhG2.

Its subcellular location is the cell membrane. The protein is Putative antiporter subunit mnhF2 (mnhF2) of Staphylococcus aureus (strain USA300).